Consider the following 505-residue polypeptide: 4-alpha-glucanotransferase (505 aa).

It belongs to the disproportionating enzyme family.

The protein resides in the cytoplasm. The catalysed reaction is Transfers a segment of a (1-&gt;4)-alpha-D-glucan to a new position in an acceptor, which may be glucose or a (1-&gt;4)-alpha-D-glucan.. The polypeptide is 4-alpha-glucanotransferase (malQ) (Streptococcus pneumoniae serotype 4 (strain ATCC BAA-334 / TIGR4)).